The following is a 121-amino-acid chain: Large ribosomal subunit protein uL22c (121 aa).

It belongs to the universal ribosomal protein uL22 family. In terms of assembly, part of the 50S ribosomal subunit.

The protein resides in the plastid. The protein localises to the chloroplast. This protein binds specifically to 23S rRNA. Its function is as follows. The globular domain of the protein is located near the polypeptide exit tunnel on the outside of the subunit, while an extended beta-hairpin is found that lines the wall of the exit tunnel in the center of the 70S ribosome. The polypeptide is Large ribosomal subunit protein uL22c (rpl22) (Lemna minor (Common duckweed)).